We begin with the raw amino-acid sequence, 395 residues long: Chalcone synthase 7 (395 aa).

C169 is a catalytic residue.

It belongs to the thiolase-like superfamily. Chalcone/stilbene synthases family.

The enzyme catalyses (E)-4-coumaroyl-CoA + 3 malonyl-CoA + 3 H(+) = 2',4,4',6'-tetrahydroxychalcone + 3 CO2 + 4 CoA. It functions in the pathway secondary metabolite biosynthesis; flavonoid biosynthesis. In terms of biological role, the primary product of this enzyme is 4,2',4',6'-tetrahydroxychalcone (also termed naringenin-chalcone or chalcone) which can under specific conditions spontaneously isomerize into naringenin. The polypeptide is Chalcone synthase 7 (CSF7) (Picea mariana (Black spruce)).